A 211-amino-acid chain; its full sequence is Ferritin heavy chain (211 aa).

The signal sequence occupies residues 1-20 (MKAVLFAVAALLAVCIPISA). The region spanning 35–191 (ITMQQSCRGS…GKASTLKKML (157 aa)) is the Ferritin-like diiron domain. C41 and C150 form a disulfide bridge. Residues E52, E87, H90, E136, and Q173 each coordinate Fe cation.

The protein belongs to the ferritin family. In terms of assembly, oligomer of 12 light (L) chains and 12 heavy (H) chains; L and H chains are disulfide-linked. The functional molecule forms a roughly spherical shell with a diameter of 12 nm and contains a central cavity into which the insoluble ferric iron core is deposited.

The protein localises to the golgi apparatus. It is found in the secreted. It catalyses the reaction 4 Fe(2+) + O2 + 4 H(+) = 4 Fe(3+) + 2 H2O. In terms of biological role, stores iron in a soluble, non-toxic, readily available form. Important for iron homeostasis. Iron is taken up in the ferrous form and deposited as ferric hydroxides after oxidation. Ferritin is composed of a heavy (H) chain which is responsible for the oxidation and uptake of ferrous iron, and a light (L) chain which facilitates the nucleation of the ferrihydrite iron core. The protein is Ferritin heavy chain of Papilio xuthus (Asian swallowtail butterfly).